A 104-amino-acid polypeptide reads, in one-letter code: DET1- and DDB1-associated protein 1 (104 aa).

The segment covering lysine 67–glutamate 77 has biased composition (basic and acidic residues). Residues lysine 67–serine 104 form a disordered region.

It belongs to the DDA1 family. As to quaternary structure, component of numerous DCX (DDB1-CUL4-X-box) E3 ubiquitin-protein ligase complexes which consist of a core of DDB1, cullin-4 (CUL4A or CUL4B), DDA1 and RBX1.

It functions in the pathway protein modification; protein ubiquitination. In terms of biological role, functions as a component of numerous distinct DCX (DDB1-CUL4-X-box) E3 ubiquitin-protein ligase complexes which mediate the ubiquitination and subsequent proteasomal degradation of target proteins. In the DCX complexes, acts as a scaffolding subunit required to stabilize the complex. The polypeptide is DET1- and DDB1-associated protein 1 (Danio rerio (Zebrafish)).